We begin with the raw amino-acid sequence, 593 residues long: Epidermal growth factor receptor kinase substrate 8-like protein 3 (593 aa).

In terms of domain architecture, PTB spans 28–155; sequence QHRVEHLMTC…ALEEELEQRP (128 aa). Disordered regions lie at residues 149 to 171, 184 to 239, and 374 to 451; these read EELE…RGPA, LEPG…ERDE, and ADWT…PAQP. Residue serine 231 is modified to Phosphoserine. Over residues 386–401 the composition is skewed to polar residues; sequence PTFSDDWQLPEPSSQA. A compositionally biased stretch (basic and acidic residues) spans 425-435; it reads PQEKTHNHDPQ. Residues 450 to 509 form the SH3 domain; that stretch reads QPALKMQVLYEFEARNPRELTVVQGEKLEVLDHSKRWWLVKNEAGRSGYIPSNILEPLQP.

Belongs to the EPS8 family. Interacts with ABI1. Part of a complex that contains SOS1, ABI1 and EPS8L2. Interacts with FASLG.

It is found in the cytoplasm. This is Epidermal growth factor receptor kinase substrate 8-like protein 3 (EPS8L3) from Homo sapiens (Human).